The sequence spans 193 residues: dTTP/UTP pyrophosphatase (193 aa).

Aspartate 71 serves as the catalytic Proton acceptor.

This sequence belongs to the Maf family. YhdE subfamily. A divalent metal cation is required as a cofactor.

Its subcellular location is the cytoplasm. The enzyme catalyses dTTP + H2O = dTMP + diphosphate + H(+). The catalysed reaction is UTP + H2O = UMP + diphosphate + H(+). Nucleoside triphosphate pyrophosphatase that hydrolyzes dTTP and UTP. May have a dual role in cell division arrest and in preventing the incorporation of modified nucleotides into cellular nucleic acids. The protein is dTTP/UTP pyrophosphatase of Geobacter sp. (strain M21).